Consider the following 661-residue polypeptide: Heme transporter BhuA (661 aa).

A signal peptide spans 1 to 23 (MKFTRTLVLVSTSLLATVATSQA). In terms of domain architecture, TBDR plug spans 48-159 (KDNIEATGGT…AAGAIRYETV (112 aa)). A TBDR beta-barrel domain is found at 170–661 (TFGARIIGSY…TFTFQTAFKF (492 aa)).

Belongs to the TonB-dependent receptor family.

It is found in the cell outer membrane. In terms of biological role, heme transporter playing an important role in stationary-phase iron acquisition and required for maintenance of chronic infection in mice. In Brucella abortus (strain 2308), this protein is Heme transporter BhuA (bhuA).